We begin with the raw amino-acid sequence, 233 residues long: Glycerol-3-phosphate acyltransferase (233 aa).

Helical transmembrane passes span 7–27 (WIII…GYII), 94–114 (ISIV…YIGF), 127–147 (VIAI…IVAF), 153–173 (SIGS…GVLI), and 185–205 (ISYE…LLII).

Belongs to the PlsY family. As to quaternary structure, probably interacts with PlsX.

Its subcellular location is the cell membrane. It catalyses the reaction an acyl phosphate + sn-glycerol 3-phosphate = a 1-acyl-sn-glycero-3-phosphate + phosphate. The protein operates within lipid metabolism; phospholipid metabolism. Functionally, catalyzes the transfer of an acyl group from acyl-phosphate (acyl-PO(4)) to glycerol-3-phosphate (G3P) to form lysophosphatidic acid (LPA). This enzyme utilizes acyl-phosphate as fatty acyl donor, but not acyl-CoA or acyl-ACP. In Acholeplasma laidlawii, this protein is Glycerol-3-phosphate acyltransferase.